Consider the following 310-residue polypeptide: tRNA pseudouridine synthase B (310 aa).

Residue Asp-49 is the Nucleophile of the active site.

Belongs to the pseudouridine synthase TruB family. Type 1 subfamily.

The catalysed reaction is uridine(55) in tRNA = pseudouridine(55) in tRNA. Responsible for synthesis of pseudouridine from uracil-55 in the psi GC loop of transfer RNAs. The polypeptide is tRNA pseudouridine synthase B (Idiomarina loihiensis (strain ATCC BAA-735 / DSM 15497 / L2-TR)).